Reading from the N-terminus, the 412-residue chain is Serine hydroxymethyltransferase (412 aa).

(6S)-5,6,7,8-tetrahydrofolate is bound by residues Leu-121 and 125 to 127 (GHL). Position 230 is an N6-(pyridoxal phosphate)lysine (Lys-230). 353-355 (TPF) is a (6S)-5,6,7,8-tetrahydrofolate binding site.

The protein belongs to the SHMT family. Homodimer. Requires pyridoxal 5'-phosphate as cofactor.

Its subcellular location is the cytoplasm. It catalyses the reaction (6R)-5,10-methylene-5,6,7,8-tetrahydrofolate + glycine + H2O = (6S)-5,6,7,8-tetrahydrofolate + L-serine. It functions in the pathway one-carbon metabolism; tetrahydrofolate interconversion. Its pathway is amino-acid biosynthesis; glycine biosynthesis; glycine from L-serine: step 1/1. Its function is as follows. Catalyzes the reversible interconversion of serine and glycine with tetrahydrofolate (THF) serving as the one-carbon carrier. This reaction serves as the major source of one-carbon groups required for the biosynthesis of purines, thymidylate, methionine, and other important biomolecules. Also exhibits THF-independent aldolase activity toward beta-hydroxyamino acids, producing glycine and aldehydes, via a retro-aldol mechanism. The chain is Serine hydroxymethyltransferase from Finegoldia magna (strain ATCC 29328 / DSM 20472 / WAL 2508) (Peptostreptococcus magnus).